A 629-amino-acid chain; its full sequence is Neuronal acetylcholine receptor subunit alpha-4 (629 aa).

A signal peptide spans 1–30 (MEIGGSGAPPPLLLLPLLLLLGTGLLPASS). Over 32 to 249 (IETRAHAEER…IIRRLPLFYT (218 aa)) the chain is Extracellular. A glycan (N-linked (GlcNAc...) asparagine) is linked at asparagine 59. Ca(2+)-binding residues include valine 78 and glutamate 80. Asparagine 109 and asparagine 176 each carry an N-linked (GlcNAc...) asparagine glycan. Disulfide bonds link cysteine 163/cysteine 177 and cysteine 227/cysteine 228. A helical membrane pass occupies residues 250–270 (INLIIPCLLISCLTVLVFYLP). The S-palmitoyl cysteine moiety is linked to residue cysteine 273. 2 helical membrane passes run 279 to 299 (LCIS…EIIP) and 312 to 332 (LLFT…VLNV). Over 333–603 (HHRSPRTHTM…KYVAMVIDRI (271 aa)) the chain is Cytoplasmic. 2 disordered regions span residues 420–459 (ETQP…NSSG) and 503–529 (SLTE…SDQT). Serine 427 carries the phosphoserine modification. The segment covering 431–442 (KVPDLKTSEVEK) has biased composition (basic and acidic residues). Residues 449–459 (PGSCHPPNSSG) are compositionally biased toward low complexity. Over residues 504 to 529 (LTESKPTGSPASLKTRPSQLPVSDQT) the composition is skewed to polar residues. 2 positions are modified to phosphoserine: serine 540 and serine 543. A helical membrane pass occupies residues 604-624 (FLWMFIIVCLLGTVGLFLPPW).

This sequence belongs to the ligand-gated ion channel (TC 1.A.9) family. Acetylcholine receptor (TC 1.A.9.1) subfamily. Alpha-4/CHRNA4 sub-subfamily. In terms of assembly, neuronal AChR is composed of two different types of subunits: alpha and beta. CHRNA4 forms heteropentameric neuronal acetylcholine receptors with CHRNB2 and CHRNB4, as well as CHRNA5 and CHRNB3 as accesory subunits. Found in two major stoichiometric forms, LS (low agonist sensitivity): (CHRNA4)3:(CHRNB2)2 and HS (high agonist sensitivity): (CHRNA4)2:(CHRNB2)3, the two stoichiometric forms differ in their unitary conductance, calcium permeability, ACh sensitivity and potentiation by divalent cation. Cells produce predominantly an (CHRNA4)3:(CHRNB2)2 nAChR. The (CHRNA4)2:(CHRNB2)3 expression is selectively up-regulated by nicotine and has lower single channel conductance and calcium permeability. In the striatum, also forms CHRNA4:CHRNA6:CHRNB2 complexes. Also found in the stoichiometric form: (CHRNA4:CHRNB2)2:CHRNB3. Interacts with RIC3; which is required for proper folding and assembly. Interacts with LYPD6.

It is found in the synaptic cell membrane. The protein resides in the cell membrane. The catalysed reaction is K(+)(in) = K(+)(out). The enzyme catalyses Na(+)(in) = Na(+)(out). It catalyses the reaction Ca(2+)(in) = Ca(2+)(out). With respect to regulation, activated by a myriad of ligands such as acetylcholine, cytisine, nicotine, choline and epibatidine. Channel potentiation by calcium is stoichiometry-selective, CHRNA4:CHRNB2 nACh receptor is achieved by calcium association with topographically distinct sites framed by anionic residues within the CHRNA4 subunit and between the CHRNA4 and CHRNB2 subunits. nAChR activity is inhibited by the antagonist alpha-conotoxins BuIA, PnIA, GID and MII, small disulfide-constrained peptides from cone snails. Component of neuronal acetylcholine receptors (nAChRs) that function as pentameric, ligand-gated cation channels with high calcium permeability among other activities. nAChRs are excitatory neurotrasnmitter receptors formed by a collection of nAChR subunits known to mediate synaptic transmission in the nervous system and the neuromuscular junction. Each nAchR subunit confers differential attributes to channel properties, including activation, deactivation and desensitization kinetics, pH sensitivity, cation permeability, and binding to allosteric modulators. CHRNA4 forms heteropentameric neuronal acetylcholine receptors with CHRNB2 and CHRNB4, as well as CHRNA5 and CHRNB3 as accesory subunits. Is the most abundant nAChR subtype expressed in the central nervous system. Found in two major stoichiometric forms,(CHRNA4)3:(CHRNB2)2 and (CHRNA4)2:(CHRNB2)3, the two stoichiometric forms differ in their unitary conductance, calcium permeability, ACh sensitivity and potentiation by divalent cation. Involved in the modulation of calcium-dependent signaling pathways, influences the release of neurotransmitters, including dopamine, glutamate and GABA. This Mus musculus (Mouse) protein is Neuronal acetylcholine receptor subunit alpha-4 (Chrna4).